A 270-amino-acid polypeptide reads, in one-letter code: NADPH-dependent 7-cyano-7-deazaguanine reductase (270 aa).

Substrate is bound at residue 79 to 81 (IES). 81–82 (SK) provides a ligand contact to NADPH. The active-site Thioimide intermediate is the Cys-177. Asp-184 (proton donor) is an active-site residue. 216 to 217 (HE) serves as a coordination point for substrate. An NADPH-binding site is contributed by 245–246 (RG).

The protein belongs to the GTP cyclohydrolase I family. QueF type 2 subfamily. Homodimer.

Its subcellular location is the cytoplasm. The catalysed reaction is 7-aminomethyl-7-carbaguanine + 2 NADP(+) = 7-cyano-7-deazaguanine + 2 NADPH + 3 H(+). It functions in the pathway tRNA modification; tRNA-queuosine biosynthesis. Catalyzes the NADPH-dependent reduction of 7-cyano-7-deazaguanine (preQ0) to 7-aminomethyl-7-deazaguanine (preQ1). The protein is NADPH-dependent 7-cyano-7-deazaguanine reductase of Acinetobacter baumannii (strain ACICU).